The following is a 1058-amino-acid chain: Carbamoyl phosphate synthase large chain (1058 aa).

Residues 1–401 (MPKRTDIQKI…SLLKACRSLE (401 aa)) form a carboxyphosphate synthetic domain region. Arginine 129, arginine 169, glycine 175, glycine 176, arginine 208, isoleucine 210, glutamate 215, glycine 241, isoleucine 242, histidine 243, glutamine 284, and glutamate 298 together coordinate ATP. The ATP-grasp 1 domain maps to 133-327 (KQLMEELEQP…IAKLAAKIAV (195 aa)). Glutamine 284, glutamate 298, and asparagine 300 together coordinate Mg(2+). 3 residues coordinate Mn(2+): glutamine 284, glutamate 298, and asparagine 300. The tract at residues 402–546 (IGVHHNEIPE…YSTYGWENES (145 aa)) is oligomerization domain. Residues 547–929 (IRSDKESVLV…ALYKAFEASY (383 aa)) form a carbamoyl phosphate synthetic domain region. In terms of domain architecture, ATP-grasp 2 spans 671–861 (EQALKELDIP…MAQVATKLIL (191 aa)). ATP-binding residues include arginine 707, serine 746, isoleucine 748, glutamate 752, glycine 777, valine 778, histidine 779, serine 780, glutamine 820, and glutamate 832. Glutamine 820, glutamate 832, and asparagine 834 together coordinate Mg(2+). 3 residues coordinate Mn(2+): glutamine 820, glutamate 832, and asparagine 834. Positions 930–1058 (LHLPTFGNVV…ESRSFVTEAI (129 aa)) constitute an MGS-like domain. An allosteric domain region spans residues 930–1058 (LHLPTFGNVV…ESRSFVTEAI (129 aa)).

It belongs to the CarB family. In terms of assembly, composed of two chains; the small (or glutamine) chain promotes the hydrolysis of glutamine to ammonia, which is used by the large (or ammonia) chain to synthesize carbamoyl phosphate. Tetramer of heterodimers (alpha,beta)4. The cofactor is Mg(2+). Mn(2+) serves as cofactor.

It catalyses the reaction hydrogencarbonate + L-glutamine + 2 ATP + H2O = carbamoyl phosphate + L-glutamate + 2 ADP + phosphate + 2 H(+). The catalysed reaction is hydrogencarbonate + NH4(+) + 2 ATP = carbamoyl phosphate + 2 ADP + phosphate + 2 H(+). It participates in amino-acid biosynthesis; L-arginine biosynthesis; carbamoyl phosphate from bicarbonate: step 1/1. The protein operates within pyrimidine metabolism; UMP biosynthesis via de novo pathway; (S)-dihydroorotate from bicarbonate: step 1/3. Functionally, large subunit of the glutamine-dependent carbamoyl phosphate synthetase (CPSase). CPSase catalyzes the formation of carbamoyl phosphate from the ammonia moiety of glutamine, carbonate, and phosphate donated by ATP, constituting the first step of 2 biosynthetic pathways, one leading to arginine and/or urea and the other to pyrimidine nucleotides. The large subunit (synthetase) binds the substrates ammonia (free or transferred from glutamine from the small subunit), hydrogencarbonate and ATP and carries out an ATP-coupled ligase reaction, activating hydrogencarbonate by forming carboxy phosphate which reacts with ammonia to form carbamoyl phosphate. The protein is Carbamoyl phosphate synthase large chain of Streptococcus pneumoniae serotype 19F (strain G54).